Reading from the N-terminus, the 364-residue chain is Probable dual-specificity RNA methyltransferase RlmN (364 aa).

The Proton acceptor role is filled by E106. The Radical SAM core domain occupies 112–351 (YPHRNTVCIS…CTVRDTRGRE (240 aa)). A disulfide bridge connects residues C119 and C356. [4Fe-4S] cluster contacts are provided by C126, C130, and C133. S-adenosyl-L-methionine contacts are provided by residues 177–178 (GE), S211, 234–236 (SLH), and N313. The active-site S-methylcysteine intermediate is C356.

The protein belongs to the radical SAM superfamily. RlmN family. It depends on [4Fe-4S] cluster as a cofactor.

Its subcellular location is the cytoplasm. The enzyme catalyses adenosine(2503) in 23S rRNA + 2 reduced [2Fe-2S]-[ferredoxin] + 2 S-adenosyl-L-methionine = 2-methyladenosine(2503) in 23S rRNA + 5'-deoxyadenosine + L-methionine + 2 oxidized [2Fe-2S]-[ferredoxin] + S-adenosyl-L-homocysteine. It carries out the reaction adenosine(37) in tRNA + 2 reduced [2Fe-2S]-[ferredoxin] + 2 S-adenosyl-L-methionine = 2-methyladenosine(37) in tRNA + 5'-deoxyadenosine + L-methionine + 2 oxidized [2Fe-2S]-[ferredoxin] + S-adenosyl-L-homocysteine. Its function is as follows. Specifically methylates position 2 of adenine 2503 in 23S rRNA and position 2 of adenine 37 in tRNAs. In Mycolicibacterium paratuberculosis (strain ATCC BAA-968 / K-10) (Mycobacterium paratuberculosis), this protein is Probable dual-specificity RNA methyltransferase RlmN.